A 53-amino-acid chain; its full sequence is Large ribosomal subunit protein bL32 (53 aa).

Positions 1 to 20 (MAVPKRRVSHTRAAKRRTHY) are enriched in basic residues. Residues 1–53 (MAVPKRRVSHTRAAKRRTHYKLTLPMPVKDADGTWRMPHHMNMTTGEYKTTKA) form a disordered region. Residues 42 to 53 (NMTTGEYKTTKA) are compositionally biased toward polar residues.

The protein belongs to the bacterial ribosomal protein bL32 family.

The protein is Large ribosomal subunit protein bL32 of Sulfurovum sp. (strain NBC37-1).